Consider the following 306-residue polypeptide: Glutathione transport system permease protein GsiC (306 aa).

At 1–8 the chain is on the cytoplasmic side; it reads MLNYFIKR. The helical transmembrane segment at 9 to 29 threads the bilayer; that stretch reads LLGLIPTLLIVMVLVFLFVHL. The Periplasmic segment spans residues 30 to 98; it reads LPGDPARLAA…QEIALRFMPT (69 aa). Residues 95 to 292 form the ABC transmembrane type-1 domain; that stretch reads FMPTFWLTVC…LEFILINLLV (198 aa). The helical transmembrane segment at 99–119 threads the bilayer; that stretch reads FWLTVCSMAWAVIFGMAIGIV. Topologically, residues 120–130 are cytoplasmic; it reads SAVWRNGWPDR. A helical transmembrane segment spans residues 131 to 151; sequence IGMTLAVSGLSFPAFALGMLL. The Periplasmic segment spans residues 152 to 168; sequence MQIFSVELGWLPTVGAD. The helical transmembrane segment at 169-189 threads the bilayer; that stretch reads TWLHYILPSLTLGAAVAAVMA. The Cytoplasmic segment spans residues 190-228; that stretch reads RFTRASFVDVLQEDYMRTARAKGVRESLVVLKHGLRNAL. The chain crosses the membrane as a helical span at residues 229 to 249; it reads IPVVTMMGLQFGFLLGGSIVV. The Periplasmic segment spans residues 250 to 278; that stretch reads EKVFNWPGLGRLLVDSVEMRDYPVIQAEV. A helical membrane pass occupies residues 279–299; it reads LLFSLEFILINLLVDMLYAAI. At 300-306 the chain is on the cytoplasmic side; the sequence is NPAIRYK.

The protein belongs to the binding-protein-dependent transport system permease family. The complex is composed of two ATP-binding proteins (GsiA), two transmembrane proteins (GsiC and GsiD) and a solute-binding protein (GsiB).

It localises to the cell inner membrane. Functionally, part of the ABC transporter complex GsiABCD involved in glutathione import. Probably responsible for the translocation of the substrate across the membrane. This Pectobacterium atrosepticum (strain SCRI 1043 / ATCC BAA-672) (Erwinia carotovora subsp. atroseptica) protein is Glutathione transport system permease protein GsiC.